The following is a 251-amino-acid chain: Cytochrome c oxidase subunit 2 (251 aa).

Residues 1–15 (MLDLLRLQLTTFIMN) constitute a propeptide, removed in mature form. Topologically, residues 16–30 (DVPTPYACYFQDSAT) are mitochondrial intermembrane. Residues 31–64 (PNQEGILELHDNIMFYLLVILGLVSWMLYTIVMT) form a helical membrane-spanning segment. The Mitochondrial matrix portion of the chain corresponds to 65 to 78 (YSKNPIAYKYIKHG). A helical transmembrane segment spans residues 79–108 (QTIEVIWTIFPAVILLIIAFPSFILLYLCD). At 109–251 (EVISPAMTIK…PKFLEWLNEQ (143 aa)) the chain is on the mitochondrial intermembrane side. Histidine 186, cysteine 221, glutamate 223, cysteine 225, histidine 229, and methionine 232 together coordinate Cu cation. Glutamate 223 contributes to the Mg(2+) binding site.

This sequence belongs to the cytochrome c oxidase subunit 2 family. In terms of assembly, component of the cytochrome c oxidase (complex IV, CIV), a multisubunit enzyme composed of 12 subunits. The complex is composed of a catalytic core of 3 subunits COX1, COX2 and COX3, encoded in the mitochondrial DNA, and 9 supernumerary subunits COX4, COX5A (or COX5B), COX6, COX7, COX8, COX9, COX12, COX13 and COX26, which are encoded in the nuclear genome. The complex exists as a monomer or a dimer and forms supercomplexes (SCs) in the inner mitochondrial membrane with a dimer of ubiquinol-cytochrome c oxidoreductase (cytochrome b-c1 complex, complex III, CIII), resulting in 2 different assemblies (supercomplexes III(2)IV and III(2)IV(2)). Cu cation is required as a cofactor. Post-translationally, the N-terminal sequence of COX2 is processed by IMP1.

The protein resides in the mitochondrion inner membrane. It carries out the reaction 4 Fe(II)-[cytochrome c] + O2 + 8 H(+)(in) = 4 Fe(III)-[cytochrome c] + 2 H2O + 4 H(+)(out). In terms of biological role, component of the cytochrome c oxidase, the last enzyme in the mitochondrial electron transport chain which drives oxidative phosphorylation. The respiratory chain contains 3 multisubunit complexes succinate dehydrogenase (complex II, CII), ubiquinol-cytochrome c oxidoreductase (cytochrome b-c1 complex, complex III, CIII) and cytochrome c oxidase (complex IV, CIV), that cooperate to transfer electrons derived from NADH and succinate to molecular oxygen, creating an electrochemical gradient over the inner membrane that drives transmembrane transport and the ATP synthase. Cytochrome c oxidase is the component of the respiratory chain that catalyzes the reduction of oxygen to water. Electrons originating from reduced cytochrome c in the intermembrane space (IMS) are transferred via the dinuclear copper A center (CU(A)) of COX2 and heme A of COX1 to the active site in COX1, a binuclear center (BNC) formed by heme A3 and copper B (CU(B)). The BNC reduces molecular oxygen to 2 water molecules unsing 4 electrons from cytochrome c in the IMS and 4 protons from the mitochondrial matrix. COX2 is a catalytic core subunit which transfers the electrons from cytochrome c via its dinuclear copper A center (CU(A)) to the BNC of the COX1. This is Cytochrome c oxidase subunit 2 (COX2) from Saccharomyces cerevisiae (strain ATCC 204508 / S288c) (Baker's yeast).